A 312-amino-acid chain; its full sequence is MTRTRSDSLAAGGLNWNSMPLKLFAGGNAKFWDPADIDFSRDRADWESLSNLERDWATRLCAQFIAGEEAVTQDIQPFMAAMRAEGRLGDEMYLTQFAFEEAKHTQVFRMWLDAVGMTDDLQCYLDDLPSYRQMFYEELPASLEALATDPSPAAQVRASATYNHVIEGMMALTGYYAWHRICVDRKVLPGMQELVRRIGDDERRHMAWGTFTCRRHVAADDANWEVFENRMNELIPLALSNTDDSFALYDEIPFGFAKEEFQQYAADKGMRRFGTISSARGRALAEIDVDYSPLQLEDTFAAEDSRVLATSA.

The Mn(2+) site is built by Glu-68, Glu-101, and His-104. The 3-(O4'-tyrosyl)-valine (Val-Tyr) cross-link spans 71 to 162 (VTQDIQPFMA…AAQVRASATY (92 aa)). Glu-101 is a Fe cation binding site. The Fe cation site is built by Glu-167, Glu-202, and His-205.

Belongs to the ribonucleoside diphosphate reductase small chain family. R2-like ligand binding oxidase subfamily. Homodimer. The cofactor is Fe cation. It depends on Mn(2+) as a cofactor.

Its function is as follows. Probable oxidase that might be involved in lipid metabolism. This is R2-like ligand binding oxidase from Mycobacterium sp. (strain KMS).